A 61-amino-acid polypeptide reads, in one-letter code: Small ribosomal subunit protein uS14 (61 aa).

Zn(2+)-binding residues include Cys24, Cys27, Cys40, and Cys43.

The protein belongs to the universal ribosomal protein uS14 family. Zinc-binding uS14 subfamily. Part of the 30S ribosomal subunit. Contacts proteins S3 and S10. Requires Zn(2+) as cofactor.

In terms of biological role, binds 16S rRNA, required for the assembly of 30S particles and may also be responsible for determining the conformation of the 16S rRNA at the A site. This Frankia casuarinae (strain DSM 45818 / CECT 9043 / HFP020203 / CcI3) protein is Small ribosomal subunit protein uS14.